Here is a 102-residue protein sequence, read N- to C-terminus: NADH-quinone oxidoreductase subunit K (102 aa).

The next 3 membrane-spanning stretches (helical) occupy residues 5–25 (ITHYLTVSALMFTIGIAGIFL), 31–51 (IIILMSIELILLSVNLNFVAF), and 66–86 (FVLTVAAAEAAIGLAILVVFF).

The protein belongs to the complex I subunit 4L family. In terms of assembly, NDH-1 is composed of 14 different subunits. Subunits NuoA, H, J, K, L, M, N constitute the membrane sector of the complex.

It is found in the cell inner membrane. It catalyses the reaction a quinone + NADH + 5 H(+)(in) = a quinol + NAD(+) + 4 H(+)(out). Its function is as follows. NDH-1 shuttles electrons from NADH, via FMN and iron-sulfur (Fe-S) centers, to quinones in the respiratory chain. The immediate electron acceptor for the enzyme in this species is believed to be ubiquinone. Couples the redox reaction to proton translocation (for every two electrons transferred, four hydrogen ions are translocated across the cytoplasmic membrane), and thus conserves the redox energy in a proton gradient. The protein is NADH-quinone oxidoreductase subunit K of Bartonella grahamii (strain as4aup).